The primary structure comprises 616 residues: Glutamine--fructose-6-phosphate aminotransferase [isomerizing] (616 aa).

Cysteine 2 serves as the catalytic Nucleophile; for GATase activity. The region spanning 2–222 is the Glutamine amidotransferase type-2 domain; that stretch reads CGIIGYSGPR…QERIVALSGD (221 aa). The disordered stretch occupies residues 70-89; the sequence is TGIGHTRWATHGEPSDRNAH. SIS domains are found at residues 289–428 and 461–606; these read IRDD…LRGF and LAHW…VDRP. Lysine 611 (for Fru-6P isomerization activity) is an active-site residue.

Homodimer.

The protein localises to the cytoplasm. The catalysed reaction is D-fructose 6-phosphate + L-glutamine = D-glucosamine 6-phosphate + L-glutamate. Its function is as follows. Catalyzes the first step in hexosamine metabolism, converting fructose-6P into glucosamine-6P using glutamine as a nitrogen source. The polypeptide is Glutamine--fructose-6-phosphate aminotransferase [isomerizing] (Tropheryma whipplei (strain Twist) (Whipple's bacillus)).